Consider the following 375-residue polypeptide: NADH-ubiquinone oxidoreductase 40 kDa subunit, mitochondrial (375 aa).

The transit peptide at 1–26 (MAPLTAAMRSTPRIIVSNAFGFQRRA) directs the protein to the mitochondrion.

The protein belongs to the complex I NDUFA9 subunit family. Complex I is composed of about 40 different subunits. Requires FAD as cofactor.

The protein localises to the mitochondrion matrix. Accessory subunit of the mitochondrial membrane respiratory chain NADH dehydrogenase (Complex I), that is believed not to be involved in catalysis. Complex I functions in the transfer of electrons from NADH to the respiratory chain. The immediate electron acceptor for the enzyme is believed to be ubiquinone. The chain is NADH-ubiquinone oxidoreductase 40 kDa subunit, mitochondrial (nuo40) from Neurospora crassa (strain ATCC 24698 / 74-OR23-1A / CBS 708.71 / DSM 1257 / FGSC 987).